We begin with the raw amino-acid sequence, 412 residues long: MAERVVLAYSGGLDTSVGIGWLKDATGKEVVALAVDVGQGGEDMEVIRQRALDCGAVEAVVVDAKDEFADDYIVPALKANALYQKRYPLVSGLSRPLIAKHLARVAHELGANSVAHGCTGKGNDQVRFEAAVAALAPDLTSIAPVRDLALTRDKAIVYANEHDLPIEQSKKSPYSIDKNVWGRAVETGFLEDPWNGPIEDLYEYTQDPDVLRDATEVTITFEAGVPVAIDGVRYSPLRIVQELNAAAGAHGIGRIDVVEDRLVGIKSREVYEAPAAMTLIEAHEELESLTIERDLGRYKRGVEKDWANLVYDGLWFSGLKRSLDAFIEDSQRHVSGDIRMTLRGGRAVVTGRRSESSLYDFDLATYDTGDTFDQSLSKGFIELWSLPSKISARRDLAVEQAALAADPAPAAE.

8-16 (AYSGGLDTS) is a binding site for ATP. L-citrulline is bound at residue Tyr-87. Gly-117 serves as a coordination point for ATP. L-aspartate is bound by residues Thr-119, Asn-123, and Asp-124. An L-citrulline-binding site is contributed by Asn-123. L-citrulline contacts are provided by Arg-127, Ser-175, Glu-259, and Tyr-271.

It belongs to the argininosuccinate synthase family. Type 1 subfamily. As to quaternary structure, homotetramer.

Its subcellular location is the cytoplasm. It carries out the reaction L-citrulline + L-aspartate + ATP = 2-(N(omega)-L-arginino)succinate + AMP + diphosphate + H(+). The protein operates within amino-acid biosynthesis; L-arginine biosynthesis; L-arginine from L-ornithine and carbamoyl phosphate: step 2/3. This Clavibacter michiganensis subsp. michiganensis (strain NCPPB 382) protein is Argininosuccinate synthase.